A 424-amino-acid chain; its full sequence is UDP-N-acetylglucosamine 1-carboxyvinyltransferase (424 aa).

Phosphoenolpyruvate is bound at residue 22-23 (KN). Arg-93 is a UDP-N-acetyl-alpha-D-glucosamine binding site. Cys-117 acts as the Proton donor in catalysis. Cys-117 is modified (2-(S-cysteinyl)pyruvic acid O-phosphothioketal). Residues 162 to 165 (KVSV), Asp-307, and Ile-329 each bind UDP-N-acetyl-alpha-D-glucosamine.

It belongs to the EPSP synthase family. MurA subfamily.

It is found in the cytoplasm. The enzyme catalyses phosphoenolpyruvate + UDP-N-acetyl-alpha-D-glucosamine = UDP-N-acetyl-3-O-(1-carboxyvinyl)-alpha-D-glucosamine + phosphate. Its pathway is cell wall biogenesis; peptidoglycan biosynthesis. Functionally, cell wall formation. Adds enolpyruvyl to UDP-N-acetylglucosamine. This is UDP-N-acetylglucosamine 1-carboxyvinyltransferase from Glaesserella parasuis serovar 5 (strain SH0165) (Haemophilus parasuis).